The primary structure comprises 357 residues: Trans-resveratrol di-O-methyltransferase (357 aa).

5 residues coordinate S-adenosyl-L-methionine: Gly-200, Asp-223, Asp-243, Met-244, and Lys-257. The Proton acceptor role is filled by His-261.

The protein belongs to the class I-like SAM-binding methyltransferase superfamily. Cation-independent O-methyltransferase family. COMT subfamily.

It catalyses the reaction trans-resveratrol + 2 S-adenosyl-L-methionine = pterostilbene + 2 S-adenosyl-L-homocysteine + 2 H(+). In terms of biological role, catalyzes the biosynthesis of pterostilbene from resveratrol. Pterostilbene has both antifungal and pharmacological properties. Also has activity toward resveratrol monomethyl ether (RME). The chain is Trans-resveratrol di-O-methyltransferase (ROMT) from Vitis vinifera (Grape).